The chain runs to 377 residues: MSNGIVIIGSGFAARQLVKNIRKQDASIPLTLIAADSMDEYNKPDLSHVISQGQRADDLTRQTAGEFAEQFNLRLFPHTWVTDIDAEAHVVKSQNNQWQYDKLVLATGASAFVPPVPGRELMLTLNSQQEYRACETQLRDARRVLIVGGGLIGSELAMDFCRAGKAVTLIDNAASILASLMPPEVSSRLQHRLTEMGVHLLLKSQLQGLEKTDSGILATLDRQRCIEVDAVIAATGLRPETALARRAGLTINRGVCVDSYLQTSNADIYALGDCAEINGQVLPFLQPIQLSAMVLAKNLLGNNTPLKLPAMLVKIKTPELPLHLAGETQRQDLRWQINTERQGMVARGVDDADQLRAFVVSEDRMKEAFGLLKTLSM.

It belongs to the FAD-dependent oxidoreductase family. The cofactor is FAD.

The protein resides in the cytoplasm. It catalyses the reaction 2 reduced [nitric oxide reductase rubredoxin domain] + NAD(+) + H(+) = 2 oxidized [nitric oxide reductase rubredoxin domain] + NADH. The protein operates within nitrogen metabolism; nitric oxide reduction. In terms of biological role, one of at least two accessory proteins for anaerobic nitric oxide (NO) reductase. Reduces the rubredoxin moiety of NO reductase. The sequence is that of Nitric oxide reductase FlRd-NAD(+) reductase from Escherichia coli O45:K1 (strain S88 / ExPEC).